Reading from the N-terminus, the 238-residue chain is Large ribosomal subunit protein uL2 (238 aa).

2 disordered regions span residues 1–34 (MGKR…PPLS) and 197–238 (VDHP…RRKR). The span at 224 to 238 (KVGHIAARRTGRRKR) shows a compositional bias: basic residues.

It belongs to the universal ribosomal protein uL2 family. As to quaternary structure, part of the 50S ribosomal subunit. Forms a bridge to the 30S subunit in the 70S ribosome.

Functionally, one of the primary rRNA binding proteins. Required for association of the 30S and 50S subunits to form the 70S ribosome, for tRNA binding and peptide bond formation. It has been suggested to have peptidyltransferase activity; this is somewhat controversial. Makes several contacts with the 16S rRNA in the 70S ribosome. This chain is Large ribosomal subunit protein uL2, found in Aeropyrum pernix (strain ATCC 700893 / DSM 11879 / JCM 9820 / NBRC 100138 / K1).